The primary structure comprises 507 residues: Histone-lysine N-methyltransferase set-18 (507 aa).

The Zn(2+) site is built by C49, C52, C65, C68, C74, C78, H86, and C90. Residues 49 to 90 (CANCLRGPAPGEKLLRCGGCNFSMYCSKECQATAWLVHKPEC) form an MYND-type zinc finger.

This sequence belongs to the class V-like SAM-binding methyltransferase superfamily. Histone-lysine methyltransferase family. Expressed in pharyngeal and body wall muscles.

It carries out the reaction L-lysyl(36)-[histone H3] + 2 S-adenosyl-L-methionine = N(6),N(6)-dimethyl-L-lysyl(36)-[histone H3] + 2 S-adenosyl-L-homocysteine + 2 H(+). In terms of biological role, histone methyltransferase. Specifically methylates 'Lys-36' of histone H3, inducing di-methylation. Plays a role in modulating lifespan and oxidative stress resistance, in a manner dependent upon daf-16/Forkhead box protein O and the Insulin/IGF-1-like signaling (IIS) mediated pathway. Represses transcription of daf-16 isoform a, perhaps by methylating histone H3 at the daf-16 promoter, which in turn leads to recruitment of histone deacetylases and thus modulation of expression. The polypeptide is Histone-lysine N-methyltransferase set-18 (Caenorhabditis elegans).